A 142-amino-acid chain; its full sequence is Ribosome-binding factor A (142 aa).

The interval 118 to 142 (DEAKQQEHGTVENAKQDGDKAEDDK) is disordered.

It belongs to the RbfA family. As to quaternary structure, monomer. Binds 30S ribosomal subunits, but not 50S ribosomal subunits or 70S ribosomes.

The protein localises to the cytoplasm. Functionally, one of several proteins that assist in the late maturation steps of the functional core of the 30S ribosomal subunit. Associates with free 30S ribosomal subunits (but not with 30S subunits that are part of 70S ribosomes or polysomes). Required for efficient processing of 16S rRNA. May interact with the 5'-terminal helix region of 16S rRNA. This is Ribosome-binding factor A from Shewanella piezotolerans (strain WP3 / JCM 13877).